The primary structure comprises 307 residues: uncharacterized protein (307 aa).

This is an uncharacterized protein from Rickettsia conorii (strain ATCC VR-613 / Malish 7).